Consider the following 204-residue polypeptide: Protein DESIGUAL 4 (204 aa).

Transmembrane regions (helical) follow at residues 13–33 (IITVIIVCIVLTVGLDIVAGF), 60–80 (FVLGIIAVSCLATAHVSANVI), 107–127 (CLFLIWVVGIFGALILANGIW), and 143–163 (VFSIGGKVCFLHAIVSGIYYI). Positions 177–204 (KPNKTKPSELKPIPTEPNEAEPNSTPNP) are disordered. Asparagine 179 is a glycosylation site (N-linked (GlcNAc...) asparagine).

The protein belongs to the DESIGUAL family. Only expressed in inflorescences.

Its subcellular location is the endoplasmic reticulum membrane. This is Protein DESIGUAL 4 from Arabidopsis thaliana (Mouse-ear cress).